The sequence spans 309 residues: GTP cyclohydrolase MptA 2 (309 aa).

It belongs to the GTP cyclohydrolase IV family. Homodimer. It depends on Fe(2+) as a cofactor.

It catalyses the reaction GTP + H2O = 7,8-dihydroneopterin 2',3'-cyclic phosphate + formate + diphosphate + H(+). Its pathway is cofactor biosynthesis; 5,6,7,8-tetrahydromethanopterin biosynthesis. Its function is as follows. Converts GTP to 7,8-dihydro-D-neopterin 2',3'-cyclic phosphate, the first intermediate in the biosynthesis of coenzyme methanopterin. The sequence is that of GTP cyclohydrolase MptA 2 from Methanocella arvoryzae (strain DSM 22066 / NBRC 105507 / MRE50).